A 227-amino-acid chain; its full sequence is 2-C-methyl-D-erythritol 4-phosphate cytidylyltransferase (227 aa).

It belongs to the IspD/TarI cytidylyltransferase family. IspD subfamily.

It catalyses the reaction 2-C-methyl-D-erythritol 4-phosphate + CTP + H(+) = 4-CDP-2-C-methyl-D-erythritol + diphosphate. The protein operates within isoprenoid biosynthesis; isopentenyl diphosphate biosynthesis via DXP pathway; isopentenyl diphosphate from 1-deoxy-D-xylulose 5-phosphate: step 2/6. Its function is as follows. Catalyzes the formation of 4-diphosphocytidyl-2-C-methyl-D-erythritol from CTP and 2-C-methyl-D-erythritol 4-phosphate (MEP). The protein is 2-C-methyl-D-erythritol 4-phosphate cytidylyltransferase of Dehalococcoides mccartyi (strain ATCC BAA-2266 / KCTC 15142 / 195) (Dehalococcoides ethenogenes (strain 195)).